We begin with the raw amino-acid sequence, 438 residues long: Exodeoxyribonuclease 7 large subunit (438 aa).

Residues 405-438 form a disordered region; it reads GATSTGPTDDIPSSAARLPSSPAPDARPASGAES.

It belongs to the XseA family. As to quaternary structure, heterooligomer composed of large and small subunits.

Its subcellular location is the cytoplasm. The enzyme catalyses Exonucleolytic cleavage in either 5'- to 3'- or 3'- to 5'-direction to yield nucleoside 5'-phosphates.. In terms of biological role, bidirectionally degrades single-stranded DNA into large acid-insoluble oligonucleotides, which are then degraded further into small acid-soluble oligonucleotides. The polypeptide is Exodeoxyribonuclease 7 large subunit (Clavibacter michiganensis subsp. michiganensis (strain NCPPB 382)).